A 281-amino-acid chain; its full sequence is Pantothenate synthetase (281 aa).

30 to 37 (MGYLHEGH) provides a ligand contact to ATP. The Proton donor role is filled by His37. Gln61 contributes to the (R)-pantoate binding site. Gln61 serves as a coordination point for beta-alanine. 147-150 (GEKD) is a binding site for ATP. Position 153 (Gln153) interacts with (R)-pantoate. ATP is bound by residues Ile176 and 184–187 (KSSR).

Belongs to the pantothenate synthetase family. In terms of assembly, homodimer.

Its subcellular location is the cytoplasm. It carries out the reaction (R)-pantoate + beta-alanine + ATP = (R)-pantothenate + AMP + diphosphate + H(+). The protein operates within cofactor biosynthesis; (R)-pantothenate biosynthesis; (R)-pantothenate from (R)-pantoate and beta-alanine: step 1/1. Its function is as follows. Catalyzes the condensation of pantoate with beta-alanine in an ATP-dependent reaction via a pantoyl-adenylate intermediate. This is Pantothenate synthetase from Clostridium botulinum (strain Langeland / NCTC 10281 / Type F).